Reading from the N-terminus, the 84-residue chain is Exodeoxyribonuclease 7 small subunit (84 aa).

The protein belongs to the XseB family. In terms of assembly, heterooligomer composed of large and small subunits.

The protein resides in the cytoplasm. It catalyses the reaction Exonucleolytic cleavage in either 5'- to 3'- or 3'- to 5'-direction to yield nucleoside 5'-phosphates.. In terms of biological role, bidirectionally degrades single-stranded DNA into large acid-insoluble oligonucleotides, which are then degraded further into small acid-soluble oligonucleotides. This chain is Exodeoxyribonuclease 7 small subunit, found in Janthinobacterium sp. (strain Marseille) (Minibacterium massiliensis).